The following is a 177-amino-acid chain: Large ribosomal subunit protein uL6 (177 aa).

It belongs to the universal ribosomal protein uL6 family. In terms of assembly, part of the 50S ribosomal subunit.

In terms of biological role, this protein binds to the 23S rRNA, and is important in its secondary structure. It is located near the subunit interface in the base of the L7/L12 stalk, and near the tRNA binding site of the peptidyltransferase center. This chain is Large ribosomal subunit protein uL6, found in Marinomonas sp. (strain MWYL1).